A 312-amino-acid polypeptide reads, in one-letter code: MDIIFYHPTFDTQWWIEALRKAIPQARVRAWKSGDNDPADYALVWHPPVEMLAGRDLKAVFALGAGVDSILSKLKAHPEMLKPSVPLFRLEDTGMGEQMQEYAVSQVLHWFRRFDDYRIQQNSSHWQPLPEYHREDFTIGILGAGVLGSKVAQSLQTWRFPLRCWSRTRKSWSGVQSFAGREELSAFLSQCRVLINLLPNTPETVGIINQQLIEKLPDGAYLLNLARGVHVVEDDLLAALDSGKVKGAMLDVFNREPLPPESPLWLHPRVAITPHVAAITRPAEAVEYISRTIAQLEKGERVCGQVDRARGY.

Arg227 is a catalytic residue. Residue His275 is the Proton donor of the active site.

The protein belongs to the D-isomer specific 2-hydroxyacid dehydrogenase family. GhrA subfamily.

The protein resides in the cytoplasm. The enzyme catalyses glycolate + NADP(+) = glyoxylate + NADPH + H(+). It carries out the reaction (R)-glycerate + NAD(+) = 3-hydroxypyruvate + NADH + H(+). It catalyses the reaction (R)-glycerate + NADP(+) = 3-hydroxypyruvate + NADPH + H(+). Catalyzes the NADPH-dependent reduction of glyoxylate and hydroxypyruvate into glycolate and glycerate, respectively. The protein is Glyoxylate/hydroxypyruvate reductase A of Escherichia coli O17:K52:H18 (strain UMN026 / ExPEC).